The primary structure comprises 160 residues: Crossover junction endodeoxyribonuclease RuvC (160 aa).

Residues D7, E70, and D142 contribute to the active site. Mg(2+)-binding residues include D7, E70, and D142.

It belongs to the RuvC family. As to quaternary structure, homodimer which binds Holliday junction (HJ) DNA. The HJ becomes 2-fold symmetrical on binding to RuvC with unstacked arms; it has a different conformation from HJ DNA in complex with RuvA. In the full resolvosome a probable DNA-RuvA(4)-RuvB(12)-RuvC(2) complex forms which resolves the HJ. It depends on Mg(2+) as a cofactor.

It is found in the cytoplasm. It carries out the reaction Endonucleolytic cleavage at a junction such as a reciprocal single-stranded crossover between two homologous DNA duplexes (Holliday junction).. In terms of biological role, the RuvA-RuvB-RuvC complex processes Holliday junction (HJ) DNA during genetic recombination and DNA repair. Endonuclease that resolves HJ intermediates. Cleaves cruciform DNA by making single-stranded nicks across the HJ at symmetrical positions within the homologous arms, yielding a 5'-phosphate and a 3'-hydroxyl group; requires a central core of homology in the junction. The consensus cleavage sequence is 5'-(A/T)TT(C/G)-3'. Cleavage occurs on the 3'-side of the TT dinucleotide at the point of strand exchange. HJ branch migration catalyzed by RuvA-RuvB allows RuvC to scan DNA until it finds its consensus sequence, where it cleaves and resolves the cruciform DNA. The sequence is that of Crossover junction endodeoxyribonuclease RuvC from Ehrlichia ruminantium (strain Gardel).